A 311-amino-acid polypeptide reads, in one-letter code: Olfactory receptor 52J3 (311 aa).

The Extracellular segment spans residues 1 to 27 (MFYHNKSIFHPVTFFLIGIPGLEDFHM). N-linked (GlcNAc...) asparagine glycosylation occurs at Asn5. The helical transmembrane segment at 28–48 (WISGPFCSVYLVALLGNATIL) threads the bilayer. Over 49 to 56 (LVIKVEQT) the chain is Cytoplasmic. The helical transmembrane segment at 57–77 (LREPMFYFLAILSTIDLALST) threads the bilayer. The Extracellular portion of the chain corresponds to 78-101 (TSVPRMLGIFWFDAHEINYGACVA). The cysteines at positions 99 and 191 are disulfide-linked. The chain crosses the membrane as a helical span at residues 102-122 (QMFLIHAFTGMEAEVLLAMAF). Residues 123-141 (DRYVAVCAPLHYATILTSQ) are Cytoplasmic-facing. A helical membrane pass occupies residues 142–162 (VLVGISMCIVIRPVLLTLPMV). At 163 to 198 (YLIYRLPFCQAHIIAHSYCEHMGIAKLSCGNIRING) the chain is on the extracellular side. Residues 199–218 (IYGLFVVSFFVLNLVLIGIS) traverse the membrane as a helical segment. Over 219 to 238 (YVYILRAVFRLPSHDAQLKA) the chain is Cytoplasmic. The chain crosses the membrane as a helical span at residues 239 to 259 (LSTCGAHVGVICVFYIPSVFS). Residues 260-274 (FLTHRFGHQIPGYIH) lie on the Extracellular side of the membrane. Residues 275-295 (ILVANLYLIIPPSLNPIIYGV) form a helical membrane-spanning segment. Residues 296–311 (RTKQIRERVLYVFTKK) are Cytoplasmic-facing.

The protein belongs to the G-protein coupled receptor 1 family.

Its subcellular location is the cell membrane. Odorant receptor. In Homo sapiens (Human), this protein is Olfactory receptor 52J3 (OR52J3).